An 890-amino-acid chain; its full sequence is Putative RNA-binding protein 15B (890 aa).

The tract at residues 1–133 is disordered; that stretch reads MKRQSERDSS…AEPACPGSSA (133 aa). Low complexity predominate over residues 10 to 20; sequence SPSGRGSSSSA. Composition is skewed to basic and acidic residues over residues 22-34 and 66-78; these read RPREREREAEAGG and GHRDGRGTGDANH. The segment covering 86–99 has biased composition (gly residues); the sequence is SGSGAGGGGRGGKA. 2 positions are modified to phosphoserine: serine 109 and serine 113. Pro residues predominate over residues 113–124; sequence SPLPPPPPPPGA. Residues 139–219 form the RRM 1 domain; the sequence is KTLLISSLSP…RPLKVEPVYL (81 aa). Residue lysine 213 forms a Glycyl lysine isopeptide (Lys-Gly) (interchain with G-Cter in SUMO2) linkage. Residues 219 to 253 are disordered; sequence LRGGGGSSRRSSSSSAAASTPPPGPPAPADPLGYL. The span at 226–237 shows a compositional bias: low complexity; it reads SRRSSSSSAAAS. Positions 238–247 are enriched in pro residues; the sequence is TPPPGPPAPA. 2 positions are modified to phosphoserine: serine 265 and serine 267. 2 RRM domains span residues 337–414 and 418–492; these read RNLF…YGKA and TRLW…FAKA. At threonine 532 the chain carries Phosphothreonine. Residues 547-705 form a disordered region; it reads EGDWTSPSKS…KPLEEPKHET (159 aa). Serine 552, serine 556, and serine 562 each carry phosphoserine. Composition is skewed to basic and acidic residues over residues 573-616 and 626-646; these read RSGE…ERSR and RGSDRTPERSRKENHSSEGTK. Positions 593–597 match the Nuclear localization signal motif; it reads RRKRR. Residues 647 to 657 are compositionally biased toward low complexity; the sequence is ESSSNSLSNSR. The span at 671–703 shows a compositional bias: basic and acidic residues; that stretch reads EAADSSHGKKARDSERNHRTTEAEPKPLEEPKH. A Glycyl lysine isopeptide (Lys-Gly) (interchain with G-Cter in SUMO2) cross-link involves residue lysine 702. The 179-residue stretch at 711–889 folds into the SPOC domain; that stretch reads LSEYAQTLQL…HMVIVIVRDT (179 aa). Positions 722–890 are interaction with Epstein-Barr virus BMLF1; sequence WNGLLVLKNS…MVIVIVRDTA (169 aa).

This sequence belongs to the RRM Spen family. In terms of assembly, component of the WMM complex, a N6-methyltransferase complex composed of a catalytic subcomplex, named MAC, and of an associated subcomplex, named MACOM. The MAC subcomplex is composed of METTL3 and METTL14. The MACOM subcomplex is composed of WTAP, ZC3H13, CBLL1/HAKAI, VIRMA, and, in some cases of RBM15 (RBM15 or RBM15B). May interact with NCOR2. Interacts with NXF1, the interaction is required to promote mRNA export. (Microbial infection) Interacts (via the SPOC domain) with Epstein-Barr virus BMLF1 (via the N-terminus); the interaction is direct. As to expression, ubiquitously expressed.

It is found in the nucleus. The protein resides in the nucleoplasm. Its subcellular location is the nucleus speckle. The protein localises to the nucleus envelope. RNA-binding protein that acts as a key regulator of N6-methyladenosine (m6A) methylation of RNAs, thereby regulating different processes, such as alternative splicing of mRNAs and X chromosome inactivation mediated by Xist RNA. Associated component of the WMM complex, a complex that mediates N6-methyladenosine (m6A) methylation of RNAs, a modification that plays a role in the efficiency of mRNA splicing and RNA processing. Plays a key role in m6A methylation, possibly by binding target RNAs and recruiting the WMM complex. Involved in random X inactivation mediated by Xist RNA: acts by binding Xist RNA and recruiting the WMM complex, which mediates m6A methylation, leading to target YTHDC1 reader on Xist RNA and promoting transcription repression activity of Xist. Functions in the regulation of alternative or illicit splicing, possibly by regulating m6A methylation. Inhibits pre-mRNA splicing. Also functions as a mRNA export factor by acting as a cofactor for the nuclear export receptor NXF1. This chain is Putative RNA-binding protein 15B, found in Homo sapiens (Human).